Reading from the N-terminus, the 222-residue chain is Thiamine-phosphate synthase (222 aa).

4-amino-2-methyl-5-(diphosphooxymethyl)pyrimidine is bound by residues 42–46 (QYRDK) and asparagine 74. Mg(2+) contacts are provided by aspartate 75 and aspartate 94. A 4-amino-2-methyl-5-(diphosphooxymethyl)pyrimidine-binding site is contributed by threonine 113. 2-[(2R,5Z)-2-carboxy-4-methylthiazol-5(2H)-ylidene]ethyl phosphate is bound at residue 140-142 (SAT). A 4-amino-2-methyl-5-(diphosphooxymethyl)pyrimidine-binding site is contributed by lysine 143. Glycine 169 provides a ligand contact to 2-[(2R,5Z)-2-carboxy-4-methylthiazol-5(2H)-ylidene]ethyl phosphate.

This sequence belongs to the thiamine-phosphate synthase family. It depends on Mg(2+) as a cofactor.

It carries out the reaction 2-[(2R,5Z)-2-carboxy-4-methylthiazol-5(2H)-ylidene]ethyl phosphate + 4-amino-2-methyl-5-(diphosphooxymethyl)pyrimidine + 2 H(+) = thiamine phosphate + CO2 + diphosphate. The catalysed reaction is 2-(2-carboxy-4-methylthiazol-5-yl)ethyl phosphate + 4-amino-2-methyl-5-(diphosphooxymethyl)pyrimidine + 2 H(+) = thiamine phosphate + CO2 + diphosphate. The enzyme catalyses 4-methyl-5-(2-phosphooxyethyl)-thiazole + 4-amino-2-methyl-5-(diphosphooxymethyl)pyrimidine + H(+) = thiamine phosphate + diphosphate. The protein operates within cofactor biosynthesis; thiamine diphosphate biosynthesis; thiamine phosphate from 4-amino-2-methyl-5-diphosphomethylpyrimidine and 4-methyl-5-(2-phosphoethyl)-thiazole: step 1/1. In terms of biological role, condenses 4-methyl-5-(beta-hydroxyethyl)thiazole monophosphate (THZ-P) and 2-methyl-4-amino-5-hydroxymethyl pyrimidine pyrophosphate (HMP-PP) to form thiamine monophosphate (TMP). In Marinobacter nauticus (strain ATCC 700491 / DSM 11845 / VT8) (Marinobacter aquaeolei), this protein is Thiamine-phosphate synthase.